A 426-amino-acid chain; its full sequence is F-box protein At2g15640 (426 aa).

Residues 1-48 (MNPSTITNDLTVEILSRLPAKSVARFHCVSKQWGSIFGSPYFKELFLT) form the F-box domain.

The sequence is that of F-box protein At2g15640 from Arabidopsis thaliana (Mouse-ear cress).